Consider the following 127-residue polypeptide: Photosystem II extrinsic protein U (127 aa).

Positions 1–31 (MSRLFRRLSTLLLCSLLVLGVWLTQPLSVQA) are cleaved as a signal peptide.

The protein belongs to the PsbU family. In terms of assembly, PSII is composed of 1 copy each of membrane proteins PsbA, PsbB, PsbC, PsbD, PsbE, PsbF, PsbH, PsbI, PsbJ, PsbK, PsbL, PsbM, PsbT, PsbX, PsbY, PsbZ, Psb30/Ycf12, peripheral proteins PsbO, CyanoQ (PsbQ), PsbU, PsbV and a large number of cofactors. It forms dimeric complexes.

The protein resides in the cellular thylakoid membrane. Functionally, one of the extrinsic, lumenal subunits of photosystem II (PSII). PSII is a light-driven water plastoquinone oxidoreductase, using light energy to abstract electrons from H(2)O, generating a proton gradient subsequently used for ATP formation. The extrinsic proteins stabilize the structure of photosystem II oxygen-evolving complex (OEC), the ion environment of oxygen evolution and protect the OEC against heat-induced inactivation. The sequence is that of Photosystem II extrinsic protein U from Synechococcus sp. (strain RCC307).